The following is a 289-amino-acid chain: RING-H2 finger protein ATL29 (289 aa).

The helical transmembrane segment at 25 to 45 (VILTVILLVFFFIGFFTLYFC) threads the bilayer. The RING-type; atypical zinc-finger motif lies at 110 to 152 (CAICLLEFDGDHVLRLLTTCYHVFHQECIDLWFESHRTCPVCR). The interval 179–237 (TSDDEEDDHHRQQTTTQIDTWPSSGQTSSIKKEQNLPEKFSRSHSTGHSIVRNKPEEED) is disordered. A compositionally biased stretch (polar residues) spans 191–207 (QTTTQIDTWPSSGQTSS). Residues 208–219 (IKKEQNLPEKFS) show a composition bias toward basic and acidic residues.

This sequence belongs to the RING-type zinc finger family. ATL subfamily.

It localises to the membrane. The enzyme catalyses S-ubiquitinyl-[E2 ubiquitin-conjugating enzyme]-L-cysteine + [acceptor protein]-L-lysine = [E2 ubiquitin-conjugating enzyme]-L-cysteine + N(6)-ubiquitinyl-[acceptor protein]-L-lysine.. It participates in protein modification; protein ubiquitination. This chain is RING-H2 finger protein ATL29 (ATL29), found in Arabidopsis thaliana (Mouse-ear cress).